Consider the following 1001-residue polypeptide: Kinesin-like protein KIN-14P (1001 aa).

Residues 53–172 (AIRRYEAANW…CVLSLRSFSE (120 aa)) enclose the Calponin-homology (CH) domain. Residues 284–300 (NESVKHALDPNDDKLLS) are compositionally biased toward basic and acidic residues. The disordered stretch occupies residues 284 to 322 (NESVKHALDPNDDKLLSRADTPPEMESTCTCSTGNMDEE). The Kinesin motor domain maps to 426-748 (NIRVYCRVRP…LKFAERVATV (323 aa)). 509–516 (GQTGSGKT) is a binding site for ATP. Residues 756–784 (NKEGGEVKELKEQIACLKAALAKKDGETE) adopt a coiled-coil conformation. 2 disordered regions span residues 804–830 (PPAF…QKKR) and 890–1001 (EPQW…SAKK). Positions 972 to 984 (PSASTKNGKQLSL) are enriched in polar residues.

This sequence belongs to the TRAFAC class myosin-kinesin ATPase superfamily. Kinesin family. KIN-14 subfamily.

The polypeptide is Kinesin-like protein KIN-14P (Oryza sativa subsp. japonica (Rice)).